The chain runs to 534 residues: Tyrosine-protein kinase Fyn (534 aa).

The N-myristoyl glycine moiety is linked to residue G2. Residues C3 and C6 are each lipidated (S-palmitoyl cysteine). Position 12 is a phosphothreonine; by PKC (T12). The interval 15-39 (TDERDGSLTQSSGYRYGTDPTPQHY) is disordered. The region spanning 82-143 (TGVTLFEALY…PSNYVAPVDS (62 aa)) is the SH3 domain. An SH2 domain is found at 149-246 (WYFGKLGRKD…GLCFNLTVIA (98 aa)). Residues 268-521 (LFLEQKLGQG…YLQGFLEDYF (254 aa)) enclose the Protein kinase domain. ATP-binding positions include 274 to 282 (LGQGCFAEV) and K296. D387 serves as the catalytic Proton acceptor. Residue Y417 is modified to Phosphotyrosine; by autocatalysis. The residue at position 528 (Y528) is a Phosphotyrosine.

It belongs to the protein kinase superfamily. Tyr protein kinase family. SRC subfamily. In terms of assembly, associates through its SH3 domain, to the p85 subunit of phosphatidylinositol 3-kinase. Requires Mn(2+) as cofactor. As to expression, thymus and spleen.

Its subcellular location is the cytoplasm. The protein localises to the nucleus. It localises to the cell membrane. It is found in the perikaryon. The enzyme catalyses L-tyrosyl-[protein] + ATP = O-phospho-L-tyrosyl-[protein] + ADP + H(+). With respect to regulation, inhibited by phosphorylation of Tyr-528 by leukocyte common antigen and activated by dephosphorylation of this site. Its function is as follows. Tyrosine-protein kinase implicated in the control of cell growth. Plays a role in the regulation of intracellular calcium levels. Required in brain development and mature brain function with important roles in the regulation of axon growth, axon guidance, and neurite extension. Role in CNTN1-mediated signaling. The polypeptide is Tyrosine-protein kinase Fyn (FYN) (Gallus gallus (Chicken)).